Reading from the N-terminus, the 262-residue chain is Virulence regulon transcriptional activator VirF (262 aa).

One can recognise an HTH araC/xylS-type domain in the interval Asp161–Tyr258. 2 consecutive DNA-binding regions (H-T-H motif) follow at residues Ser178–Lys199 and Ile225–Tyr248.

In terms of assembly, homodimer.

In terms of biological role, primary regulator of plasmid-encoded virulence genes. Activates the transcription of icsA (virG) and of virB, which is an activator of the ipaABCD virulence regulon. The sequence is that of Virulence regulon transcriptional activator VirF (virF) from Shigella dysenteriae.